The primary structure comprises 340 residues: Heat-inducible transcription repressor HrcA (340 aa).

Belongs to the HrcA family.

Negative regulator of class I heat shock genes (grpE-dnaK-dnaJ and groELS operons). Prevents heat-shock induction of these operons. In Burkholderia ambifaria (strain MC40-6), this protein is Heat-inducible transcription repressor HrcA.